A 234-amino-acid polypeptide reads, in one-letter code: Opacity protein opA56 (234 aa).

A signal peptide is located at residue Ala-1.

Belongs to the opacity porin family.

It localises to the cell outer membrane. Functionally, implicated in a number of adherence functions. OPA proteins are implicated in pathogenesis and are subject to phase variation. The protein is Opacity protein opA56 (opaF) of Neisseria gonorrhoeae.